A 218-amino-acid chain; its full sequence is DNA endonuclease I-CeuI (218 aa).

Residues glycine 65 and glutamate 66 each coordinate Mg(2+). The segment at 71 to 75 (ISTKK) is interaction with DNA. Aspartate 86 provides a ligand contact to Mg(2+). 3 interaction with DNA regions span residues 90 to 94 (NVTQH), 114 to 116 (RHK), and 191 to 199 (KQQGQSNEG).

It belongs to the LAGLIDADG endonuclease family. In terms of assembly, homodimer. Mg(2+) is required as a cofactor.

It is found in the plastid. The protein localises to the chloroplast. Functionally, endonuclease involved in intron homing. Recognizes a degenerate sequence of 17-19 bp to produce a staggered cut 5 bp downstream from the CeLSU.5 intron insertion site. The polypeptide is DNA endonuclease I-CeuI (Chlamydomonas moewusii (Chlamydomonas eugametos)).